Consider the following 516-residue polypeptide: MYPRGVKRSQHDRHKQTAFRTIKRSITHRPTSKFISHFAKNFRGKLAPLKQLDESRLDALSLTELEQLKTIIEEKQQEKRAQNNAITFLPNLPTVPFADTNFSIKSLGLRPYNGDARDPKQRIRDRFPQTHERICLLTNDILETDLLLRYRQCLDSLTREENQQLMGDRIFSLTNSPCLAFTVATVEEACSYFKFHDLHNLPVNPQDLFMYTITVMKFEFFNKLNMAKLTCVFNDNGHGDIEYRKLRQLCGKPVLDREMPNSEFEVQQQTPDSFRHPIQQAMSIVVTFARILRQIKEHIIRTKKPQFIRDFDTERVAERYECGLISRLIGKQFSNHKCDDVSCQNRIERIMAPWKPSLFFCTYFAKDAPKFKLFPNLPHEYRNLSFTCPKVDMEPSCSYSTSRDLPQTSHRSHKNQGTPKVKSKVCVEKPDTSNLTTTKTTTEILIEESMETDNKIPDPRELNFNQAKQDEIVIININENVNSKHESESSVEMDLDLDYEADTCETNLNTYSSDSE.

Zn(2+) contacts are provided by C231, H336, C338, and C343. The CHC2-type zinc finger occupies 231–343 (CVFNDNGHGD…SNHKCDDVSC (113 aa)). A compositionally biased stretch (polar residues) spans 399 to 409 (YSTSRDLPQTS). Residues 399 to 423 (YSTSRDLPQTSHRSHKNQGTPKVKS) form a disordered region.

It belongs to the HHV-1 ICP27 protein family.

The protein resides in the virion tegument. It localises to the virion. The protein localises to the host nucleus. It is found in the host cytoplasm. Functionally, immediate early (EI) protein that plays many roles during productive infection including regulation of viral gene expression and nuclear export of intronless viral RNAs. In Homo sapiens (Human), this protein is mRNA export factor ICP27 homolog.